Reading from the N-terminus, the 835-residue chain is Leucine--tRNA ligase (835 aa).

The 'HIGH' region signature appears at 36–46 (PYPSGKIHVGH). A 'KMSKS' region motif is present at residues 602–606 (KMSKS). Position 605 (Lys605) interacts with ATP.

Belongs to the class-I aminoacyl-tRNA synthetase family.

It is found in the cytoplasm. The enzyme catalyses tRNA(Leu) + L-leucine + ATP = L-leucyl-tRNA(Leu) + AMP + diphosphate. In Rickettsia felis (strain ATCC VR-1525 / URRWXCal2) (Rickettsia azadi), this protein is Leucine--tRNA ligase.